We begin with the raw amino-acid sequence, 320 residues long: 1-aminocyclopropane-1-carboxylate oxidase 3 (320 aa).

One can recognise a Fe2OG dioxygenase domain in the interval 153–253 (PNFGTKVSNY…RMSLASFYNP (101 aa)). 3 residues coordinate Fe cation: His-177, Asp-179, and His-234.

It belongs to the iron/ascorbate-dependent oxidoreductase family. The cofactor is Fe cation.

The enzyme catalyses 1-aminocyclopropane-1-carboxylate + L-ascorbate + O2 = ethene + L-dehydroascorbate + hydrogen cyanide + CO2 + 2 H2O. It participates in alkene biosynthesis; ethylene biosynthesis via S-adenosyl-L-methionine; ethylene from S-adenosyl-L-methionine: step 2/2. The polypeptide is 1-aminocyclopropane-1-carboxylate oxidase 3 (ACO3) (Petunia hybrida (Petunia)).